We begin with the raw amino-acid sequence, 234 residues long: Large ribosomal subunit protein uL1 (234 aa).

This sequence belongs to the universal ribosomal protein uL1 family. In terms of assembly, part of the 50S ribosomal subunit.

Its function is as follows. Binds directly to 23S rRNA. The L1 stalk is quite mobile in the ribosome, and is involved in E site tRNA release. Functionally, protein L1 is also a translational repressor protein, it controls the translation of the L11 operon by binding to its mRNA. This Geobacter metallireducens (strain ATCC 53774 / DSM 7210 / GS-15) protein is Large ribosomal subunit protein uL1.